The sequence spans 166 residues: Ribosome maturation factor RimM (166 aa).

Residues 94–166 (EDEFYITDLN…AILNYKRDEL (73 aa)) form the PRC barrel domain.

Belongs to the RimM family. As to quaternary structure, binds ribosomal protein uS19.

Its subcellular location is the cytoplasm. In terms of biological role, an accessory protein needed during the final step in the assembly of 30S ribosomal subunit, possibly for assembly of the head region. Essential for efficient processing of 16S rRNA. May be needed both before and after RbfA during the maturation of 16S rRNA. It has affinity for free ribosomal 30S subunits but not for 70S ribosomes. The protein is Ribosome maturation factor RimM of Rickettsia bellii (strain RML369-C).